Consider the following 109-residue polypeptide: Archaeosine synthase (109 aa).

Residue Cys-21 is the Thioimide intermediate of the active site. Catalysis depends on Asp-28, which acts as the Proton donor/acceptor. Substrate is bound by residues Asp-28, 43-46 (LAIE), and 62-63 (HE).

Belongs to the archaeosine synthase type 2 family. As to quaternary structure, forms a symmetric tunnel-fold (T-fold) homodecamer of two head-to-head facing pentameric subunits, with 10 active sites at the intermonomer interfaces.

The catalysed reaction is 7-cyano-7-carbaguanosine(15) in tRNA + NH4(+) = archaeosine(15) in tRNA. The protein operates within tRNA modification; archaeosine-tRNA biosynthesis. Its function is as follows. Is responsible for the final step in the biosynthesis of archaeosine, a modified nucleoside present in the dihydrouridine loop (D-loop) of archaeal tRNA. Catalyzes the conversion of 7-cyano-7-deazaguanine (preQ0)-modified tRNA to archaeosine-tRNA, transforming a nitrile group to a formamidine group. Can use neither glutamine nor asparagine as amino donor in vitro, is only able to utilize free ammonium. However, the enzyme might function in vivo with a partner that serves to generate ammonium. This is Archaeosine synthase from Pyrobaculum calidifontis (strain DSM 21063 / JCM 11548 / VA1).